Reading from the N-terminus, the 244-residue chain is Methylthioribulose-1-phosphate dehydratase (244 aa).

C89 contributes to the substrate binding site. Residues H107 and H109 each coordinate Zn(2+). E130 (proton donor/acceptor) is an active-site residue. H192 serves as a coordination point for Zn(2+).

Belongs to the aldolase class II family. MtnB subfamily. It depends on Zn(2+) as a cofactor.

It localises to the cytoplasm. It catalyses the reaction 5-(methylsulfanyl)-D-ribulose 1-phosphate = 5-methylsulfanyl-2,3-dioxopentyl phosphate + H2O. It functions in the pathway amino-acid biosynthesis; L-methionine biosynthesis via salvage pathway; L-methionine from S-methyl-5-thio-alpha-D-ribose 1-phosphate: step 2/6. Catalyzes the dehydration of methylthioribulose-1-phosphate (MTRu-1-P) into 2,3-diketo-5-methylthiopentyl-1-phosphate (DK-MTP-1-P). The sequence is that of Methylthioribulose-1-phosphate dehydratase from Saccharomyces cerevisiae (strain ATCC 204508 / S288c) (Baker's yeast).